A 570-amino-acid chain; its full sequence is Sulfite reductase [NADPH] hemoprotein beta-component (570 aa).

C434, C440, C479, and C483 together coordinate [4Fe-4S] cluster. Residue C483 coordinates siroheme.

The protein belongs to the nitrite and sulfite reductase 4Fe-4S domain family. As to quaternary structure, alpha(8)-beta(8). The alpha component is a flavoprotein, the beta component is a hemoprotein. Requires siroheme as cofactor. It depends on [4Fe-4S] cluster as a cofactor.

The catalysed reaction is hydrogen sulfide + 3 NADP(+) + 3 H2O = sulfite + 3 NADPH + 4 H(+). Its pathway is sulfur metabolism; hydrogen sulfide biosynthesis; hydrogen sulfide from sulfite (NADPH route): step 1/1. In terms of biological role, component of the sulfite reductase complex that catalyzes the 6-electron reduction of sulfite to sulfide. This is one of several activities required for the biosynthesis of L-cysteine from sulfate. This Shigella dysenteriae serotype 1 (strain Sd197) protein is Sulfite reductase [NADPH] hemoprotein beta-component.